A 138-amino-acid chain; its full sequence is Basic phospholipase A2 Cvv-N6 (138 aa).

A signal peptide spans 1 to 16 (MRTFWIVALLLVGVEG). 7 cysteine pairs are disulfide-bonded: C42–C131, C44–C60, C59–C111, C65–C138, C66–C104, C73–C97, and C91–C102. Ca(2+)-binding residues include Y43, G45, and G47. The active site involves H63. Residue D64 coordinates Ca(2+). D105 is an active-site residue.

This sequence belongs to the phospholipase A2 family. Group II subfamily. D49 sub-subfamily. Monomer. Binds to calmodulin. Ca(2+) serves as cofactor. As to expression, expressed by the venom gland.

It is found in the secreted. The enzyme catalyses a 1,2-diacyl-sn-glycero-3-phosphocholine + H2O = a 1-acyl-sn-glycero-3-phosphocholine + a fatty acid + H(+). With respect to regulation, heparin and wedelolactone inhibit the myotoxic activity. The PLA2 inhibitor, para-bromophenacyl bromide (BPB), inhibits enzymatic and myotoxic activities. Functionally, snake venom phospholipase A2 (PLA2) that is myotoxic and displays moderate edema-inducing activity in rat paws. Does not show neurotoxic activity. PLA2 catalyzes the calcium-dependent hydrolysis of the 2-acyl groups in 3-sn-phosphoglycerides. The polypeptide is Basic phospholipase A2 Cvv-N6 (Crotalus viridis viridis (Prairie rattlesnake)).